Consider the following 207-residue polypeptide: Negative modulator of initiation of replication (207 aa).

Polar residues predominate over residues Ala43–Ala54. Positions Ala43 to Glu63 are disordered.

Belongs to the SeqA family. Homodimer. Polymerizes to form helical filaments.

It is found in the cytoplasm. In terms of biological role, negative regulator of replication initiation, which contributes to regulation of DNA replication and ensures that replication initiation occurs exactly once per chromosome per cell cycle. Binds to pairs of hemimethylated GATC sequences in the oriC region, thus preventing assembly of replication proteins and re-initiation at newly replicated origins. Repression is relieved when the region becomes fully methylated. This Psychromonas ingrahamii (strain DSM 17664 / CCUG 51855 / 37) protein is Negative modulator of initiation of replication.